A 447-amino-acid chain; its full sequence is MSTMTPAEIVSELDKHIIGQAKAKKAVAVALRNRWRRQQVADPLRQEITPKNILMIGPTGVGKTEIARRLAKLADAPFIKIEATKFTEVGYVGRDVDSIVRDLIEISVKQTRETEMRKVRSKATDQAEDRILDILLPQPRAVGFGGNAEHANDDNNATRQTFRKRLREGQLDDKEVELDIEQPSAGMDIMAPPGMEEMTEQIRSMFSNLGSGKKQRRKVKIKEALKLLTDEEAAKMLNDEEVKTKAVQNVEQNGIVFLDEIDKITSRNNEGSGGEVSRQGVQRDLLPLVEGTTVNTKYGMVKTDHILFIASGAFHLAKPSDLIPELQGRFPIRVELDSLSVNDFEAILVATDASLVKQYQALLATEDVQLEFADDGIRRLAEIAYSVNEKTENIGARRLYTVIEKLLEEVSFSAGNHAGERVTIDAKYVDRALGEVSQDEDLSRYVL.

ATP-binding positions include I18, G60–E65, D259, E325, and R397.

This sequence belongs to the ClpX chaperone family. HslU subfamily. As to quaternary structure, a double ring-shaped homohexamer of HslV is capped on each side by a ring-shaped HslU homohexamer. The assembly of the HslU/HslV complex is dependent on binding of ATP.

Its subcellular location is the cytoplasm. Functionally, ATPase subunit of a proteasome-like degradation complex; this subunit has chaperone activity. The binding of ATP and its subsequent hydrolysis by HslU are essential for unfolding of protein substrates subsequently hydrolyzed by HslV. HslU recognizes the N-terminal part of its protein substrates and unfolds these before they are guided to HslV for hydrolysis. The chain is ATP-dependent protease ATPase subunit HslU from Burkholderia lata (strain ATCC 17760 / DSM 23089 / LMG 22485 / NCIMB 9086 / R18194 / 383).